We begin with the raw amino-acid sequence, 241 residues long: Lactate utilization protein C (241 aa).

This sequence belongs to the LutC/YkgG family.

Is involved in L-lactate degradation and allows cells to grow with lactate as the sole carbon source. This chain is Lactate utilization protein C, found in Bacillus velezensis (strain DSM 23117 / BGSC 10A6 / LMG 26770 / FZB42) (Bacillus amyloliquefaciens subsp. plantarum).